We begin with the raw amino-acid sequence, 323 residues long: MAFVPAPGYQPTYNPTLPYYKPIPGGLRVGMSVYIQGVANEHMKRFFVNFVVGQGPGADVAFHFNPRFDGWDKVVFNSQQDGKWGNEEKKRSMPFRKAPAFELVIMVLPEHYKVVVNGDPFYEFGHRIPVQLVTHLQVDGDLTLQSINFIGGQPAPSPGPMPNPGYPGPGKHNQQPCNLPCMEGAPTFNPPVPYKTRLQGGLVARRTIVIKGYVPPSGKSLVINFKVGSSGDVALHINPRLTEGIVVRNSYLNGKWGAEERKSSFNPFAPGQYFDLSIRCGLDRFKVYANGQHLFDFSHRLSNFQGVDTLEIQGDVTLSYVQI.

2 consecutive Galectin domains span residues 19-150 (YYKP…INFI) and 194-323 (YKTR…YVQI). An a beta-D-galactoside-binding site is contributed by 256–262 (WGAEERK).

Monomer.

Its function is as follows. Galectin that binds lactose and a related range of sugars. May be involved in the assembly of adherens junctions. The sequence is that of Galectin-4 (LGALS4) from Sus scrofa (Pig).